The sequence spans 1488 residues: Chromosome partition protein MukB (1488 aa).

34-41 provides a ligand contact to ATP; it reads GGNGAGKS. 3 coiled-coil regions span residues 326–418, 444–472, and 509–602; these read LEAD…QYNQ, LDTFQAKEQEATEKLLSLEQKMSVAQTAH, and RHLA…QRAP. The tract at residues 666–783 is flexible hinge; sequence PGGAEDQRLN…SLPIFGRAAR (118 aa). Coiled coils occupy residues 835–923, 977–1116, and 1209–1265; these read EAEI…AKLE, EMLS…AKAG, and VEAI…LQSV. The disordered stretch occupies residues 1049–1074; the sequence is ADSGAEERARQRRDELHAQLSNNRSR. Residues 1051-1065 show a composition bias toward basic and acidic residues; it reads SGAEERARQRRDELH.

It belongs to the SMC family. MukB subfamily. In terms of assembly, homodimerization via its hinge domain. Binds to DNA via its C-terminal region. Interacts, and probably forms a ternary complex, with MukE and MukF via its C-terminal region. The complex formation is stimulated by calcium or magnesium. Interacts with tubulin-related protein FtsZ.

The protein resides in the cytoplasm. It is found in the nucleoid. In terms of biological role, plays a central role in chromosome condensation, segregation and cell cycle progression. Functions as a homodimer, which is essential for chromosome partition. Involved in negative DNA supercoiling in vivo, and by this means organize and compact chromosomes. May achieve or facilitate chromosome segregation by condensation DNA from both sides of a centrally located replisome during cell division. This Salmonella typhi protein is Chromosome partition protein MukB.